Here is a 1026-residue protein sequence, read N- to C-terminus: Isoleucine--tRNA ligase (1026 aa).

Residues 51-61 (PTANGRPHIGH) carry the 'HIGH' region motif. Positions 591–595 (KMSKS) match the 'KMSKS' region motif. Lys-594 serves as a coordination point for ATP.

Belongs to the class-I aminoacyl-tRNA synthetase family. IleS type 2 subfamily. Monomer. Requires Zn(2+) as cofactor.

Its subcellular location is the cytoplasm. It catalyses the reaction tRNA(Ile) + L-isoleucine + ATP = L-isoleucyl-tRNA(Ile) + AMP + diphosphate. Its function is as follows. Catalyzes the attachment of isoleucine to tRNA(Ile). As IleRS can inadvertently accommodate and process structurally similar amino acids such as valine, to avoid such errors it has two additional distinct tRNA(Ile)-dependent editing activities. One activity is designated as 'pretransfer' editing and involves the hydrolysis of activated Val-AMP. The other activity is designated 'posttransfer' editing and involves deacylation of mischarged Val-tRNA(Ile). The sequence is that of Isoleucine--tRNA ligase from Thermoplasma acidophilum (strain ATCC 25905 / DSM 1728 / JCM 9062 / NBRC 15155 / AMRC-C165).